The following is an 83-amino-acid chain: U5-theraphotoxin-Hs1c (83 aa).

The N-terminal stretch at 1–21 (MKTSMFLTLTGLVLLFVVCYA) is a signal peptide. A propeptide spanning residues 22 to 49 (SESEEKEFPKELLSSIFAADSDFKVEER) is cleaved from the precursor. Cystine bridges form between cysteine 51–cysteine 63, cysteine 56–cysteine 68, and cysteine 62–cysteine 75.

The protein belongs to the neurotoxin 10 (Hwtx-1) family. 51 (Hntx-8) subfamily. Hntx-8 sub-subfamily. As to expression, expressed by the venom gland.

Its subcellular location is the secreted. Functionally, agglutinates erythrocytes. The chain is U5-theraphotoxin-Hs1c from Cyriopagopus schmidti (Chinese bird spider).